Reading from the N-terminus, the 231-residue chain is Fibronectin type III domain-containing protein 4 (231 aa).

The N-terminal stretch at 1–40 (MPLAPPANSVETMASLMPLSPYLSPTVLLLVSCDLGFVRA) is a signal peptide. Residues 41-163 (DRPPSPVNVT…GLDGERPLQT (123 aa)) lie on the Extracellular side of the membrane. The Fibronectin type-III domain occupies 43–136 (PPSPVNVTVT…PRVHFRTLKG (94 aa)). N-linked (GlcNAc...) asparagine glycosylation is found at asparagine 48 and asparagine 143. The disordered stretch occupies residues 118–156 (GLRGESPPGPRVHFRTLKGSDRLPSNSSSPGDITVEGLD). Residues 164-184 (GEVVIIVVVLLMWAAVIGLFC) traverse the membrane as a helical segment. Over 185-231 (RQYDIIKDNDSNNNPKEKGKGPEQSPQGRPVGTTRQKKSPSINTIDV) the chain is Cytoplasmic. The segment covering 193–205 (NDSNNNPKEKGKG) has biased composition (basic and acidic residues). A disordered region spans residues 193-231 (NDSNNNPKEKGKGPEQSPQGRPVGTTRQKKSPSINTIDV).

In terms of tissue distribution, predominantly expressed in the liver and in the brain, including in the cortex, hypothalamus and hippocampus. Also expressed in heart, lung, kidney and testis. In the colon, expressed in the epithelium and in a subset of immune cells in lymphoid aggregates.

The protein localises to the membrane. It localises to the secreted. Has anti-inflammatory properties. In the colon, acts on macrophages to down-regulate inflammation. May suppress osteoclastogenesis and mature osteoclast resorptive function. In white adipose tissue, decreases local inflammation, via interaction with GPR116. Also required for proper systemic glucose tolerance, specifically sensitizing white adipocytes to insulin and promoting glucose uptake. The insulin sensitizing function in adipose tissue is mediated by interaction with ADGRF5/GPR116 and activation of cAMP signaling. In Mus musculus (Mouse), this protein is Fibronectin type III domain-containing protein 4 (Fndc4).